Here is a 316-residue protein sequence, read N- to C-terminus: Phosphatidylinositol mannoside acyltransferase (316 aa).

H137 serves as the catalytic Proton acceptor. Residues H137 and R175 each coordinate hexadecanoyl-CoA. The active site involves E211. E240 lines the hexadecanoyl-CoA pocket.

This sequence belongs to the LpxL/LpxM/LpxP family.

The protein resides in the cell inner membrane. It catalyses the reaction a 2,6-O-bis(alpha-D-mannopyranosyl)-1-phosphatidyl-1D-myo-inositol + an acyl-CoA = a 2-O-(alpha-D-mannosyl)-6-O-(6-O-acyl-alpha-D-mannosyl)-1-phosphatidyl-1D-myo-inositol + CoA. The catalysed reaction is a 1,2-diacyl-sn-glycero-3-phospho-[alpha-D-mannopyranosyl-(1&lt;-&gt;6)-D-myo-inositol] + an acyl-CoA = a 1,2-diacyl-sn-glycero-3-phospho-[alpha-D-6-acyl-mannopyranosyl-(1&lt;-&gt;6)-D-myo-inositol] + CoA. The protein operates within phospholipid metabolism; phosphatidylinositol metabolism. Functionally, catalyzes the transfer of a palmitoyl moiety from palmitoyl-CoA to the 6-position of the mannose ring linked to the 2-position of myo-inositol in phosphatidyl-myo-inositol monomannoside (PIM1) or dimannoside (PIM2). The polypeptide is Phosphatidylinositol mannoside acyltransferase (Mycobacterium tuberculosis (strain CDC 1551 / Oshkosh)).